An 891-amino-acid chain; its full sequence is DNA polymerase I (891 aa).

The 5'-3' exonuclease domain maps to 1–313 (MEQPVIKEGT…LLDNTPALDN (313 aa)). The 3'-5' exonuclease domain maps to 314–488 (TPKKSCMIVL…RLCEYFEKGG (175 aa)). The tract at residues 492–890 (NLLSLAREIE…FIAKRWNELK (399 aa)) is polymerase.

The protein belongs to the DNA polymerase type-A family. As to quaternary structure, single-chain monomer with multiple functions.

The enzyme catalyses DNA(n) + a 2'-deoxyribonucleoside 5'-triphosphate = DNA(n+1) + diphosphate. In addition to polymerase activity, this DNA polymerase exhibits 3'-5' and 5'-3' exonuclease activity. This is DNA polymerase I (polA) from Helicobacter pylori (strain ATCC 700392 / 26695) (Campylobacter pylori).